The chain runs to 78 residues: Polcalcin Phl p 7 (78 aa).

2 EF-hand domains span residues 1-35 (MADD…LGST) and 35-70 (TSAD…NPGL). The Ca(2+) site is built by aspartate 13, asparagine 15, aspartate 17, lysine 19, glutamate 24, aspartate 48, aspartate 50, aspartate 52, and glutamate 59.

As to quaternary structure, monomer. In terms of tissue distribution, specifically expressed in pollen.

Its function is as follows. May be involved in the regulation of pollen-tube growth. This chain is Polcalcin Phl p 7, found in Phleum pratense (Common timothy).